The sequence spans 253 residues: Imidazole glycerol phosphate synthase subunit HisF (253 aa).

Catalysis depends on residues Asp-11 and Asp-130.

This sequence belongs to the HisA/HisF family. Heterodimer of HisH and HisF.

Its subcellular location is the cytoplasm. The enzyme catalyses 5-[(5-phospho-1-deoxy-D-ribulos-1-ylimino)methylamino]-1-(5-phospho-beta-D-ribosyl)imidazole-4-carboxamide + L-glutamine = D-erythro-1-(imidazol-4-yl)glycerol 3-phosphate + 5-amino-1-(5-phospho-beta-D-ribosyl)imidazole-4-carboxamide + L-glutamate + H(+). It participates in amino-acid biosynthesis; L-histidine biosynthesis; L-histidine from 5-phospho-alpha-D-ribose 1-diphosphate: step 5/9. Functionally, IGPS catalyzes the conversion of PRFAR and glutamine to IGP, AICAR and glutamate. The HisF subunit catalyzes the cyclization activity that produces IGP and AICAR from PRFAR using the ammonia provided by the HisH subunit. In Thermoanaerobacter sp. (strain X514), this protein is Imidazole glycerol phosphate synthase subunit HisF.